A 61-amino-acid chain; its full sequence is Transmembrane protein 300R (61 aa).

Transmembrane regions (helical) follow at residues F5 to T25 and S35 to Q55.

The protein localises to the membrane. This is Transmembrane protein 300R from Invertebrate iridescent virus 6 (IIV-6).